The following is a 626-amino-acid chain: Probable potassium transport system protein Kup (626 aa).

Transmembrane regions (helical) follow at residues valine 8–serine 28, isoleucine 44–isoleucine 64, isoleucine 102–threonine 122, proline 139–valine 159, phenylalanine 171–isoleucine 191, isoleucine 196–alanine 216, phenylalanine 217–methionine 237, tryptophan 249–leucine 269, leucine 281–isoleucine 301, isoleucine 339–phenylalanine 359, methionine 377–tryptophan 397, valine 399–leucine 419, and isoleucine 421–threonine 441.

The protein belongs to the HAK/KUP transporter (TC 2.A.72) family.

The protein localises to the cell inner membrane. The catalysed reaction is K(+)(in) + H(+)(in) = K(+)(out) + H(+)(out). Transport of potassium into the cell. Likely operates as a K(+):H(+) symporter. This Acinetobacter baylyi (strain ATCC 33305 / BD413 / ADP1) protein is Probable potassium transport system protein Kup.